Here is a 322-residue protein sequence, read N- to C-terminus: Nitrilase (322 aa).

The CN hydrolase domain occupies 5 to 283; it reads VRVGAVQSEP…EAILTADIDL (279 aa). Glutamate 45 (proton acceptor) is an active-site residue. The active site involves lysine 127. Cysteine 162 acts as the Nucleophile in catalysis.

This sequence belongs to the carbon-nitrogen hydrolase superfamily. Nitrilase family.

It catalyses the reaction a nitrile + 2 H2O = a carboxylate + NH4(+). Nitrilase that hydrolyzes preferentially 4-cyanopyridine. The protein is Nitrilase of Talaromyces marneffei (strain ATCC 18224 / CBS 334.59 / QM 7333) (Penicillium marneffei).